The chain runs to 689 residues: tRNA 5-methylaminomethyl-2-thiouridine biosynthesis bifunctional protein MnmC (689 aa).

The segment at 1–245 is tRNA (mnm(5)s(2)U34)-methyltransferase; the sequence is MNQRPIQTAT…KREMLTGTLP (245 aa). The interval 270-689 is FAD-dependent cmnm(5)s(2)U34 oxidoreductase; that stretch reads IGGGIVSALT…RSPATQESSR (420 aa).

It in the N-terminal section; belongs to the methyltransferase superfamily. tRNA (mnm(5)s(2)U34)-methyltransferase family. The protein in the C-terminal section; belongs to the DAO family. The cofactor is FAD.

The protein resides in the cytoplasm. It catalyses the reaction 5-aminomethyl-2-thiouridine(34) in tRNA + S-adenosyl-L-methionine = 5-methylaminomethyl-2-thiouridine(34) in tRNA + S-adenosyl-L-homocysteine + H(+). Functionally, catalyzes the last two steps in the biosynthesis of 5-methylaminomethyl-2-thiouridine (mnm(5)s(2)U) at the wobble position (U34) in tRNA. Catalyzes the FAD-dependent demodification of cmnm(5)s(2)U34 to nm(5)s(2)U34, followed by the transfer of a methyl group from S-adenosyl-L-methionine to nm(5)s(2)U34, to form mnm(5)s(2)U34. The sequence is that of tRNA 5-methylaminomethyl-2-thiouridine biosynthesis bifunctional protein MnmC from Yersinia pseudotuberculosis serotype O:1b (strain IP 31758).